Consider the following 495-residue polypeptide: UDP-glycosyltransferase 73C11 (495 aa).

His24 (proton acceptor) is an active-site residue. His24 lines the an anthocyanidin pocket. The active-site Charge relay is Asp129. 6 residues coordinate UDP-alpha-D-glucose: Gln358, His373, Trp376, Asn377, Ser378, and Glu381. An an anthocyanidin-binding site is contributed by Gly396. UDP-alpha-D-glucose is bound by residues Asp397 and Gln398.

Belongs to the UDP-glycosyltransferase family.

The enzyme catalyses oleanolate + UDP-alpha-D-glucose = oleanolate 3-O-beta-D-glucoside + UDP + H(+). Catalyzes the transfer of a glucose (Glc) moiety from UDP-Glc to the C-3 position of the oleanane sapogenins oleanolate and hederagenin, and to the C-28 carboxylic group of the lupane sapogenin betulinate. The monoglucosylated hederagenin 3-O-beta-D-glucoside is a feeding deterrent of the yellow-striped flea beetle (Phyllotreta nemorum). The polypeptide is UDP-glycosyltransferase 73C11 (Barbarea vulgaris (Yellow rocket)).